Consider the following 20-residue polypeptide: Bulb protein (20 aa).

The interval 1–20 is disordered; it reads APDVHTRXTQNGLPPGXLPS.

The chain is Bulb protein from Narcissus pseudonarcissus (Daffodil).